We begin with the raw amino-acid sequence, 136 residues long: uncharacterized protein (136 aa).

The helical transmembrane segment at phenylalanine 102 to valine 118 threads the bilayer.

It is found in the membrane. This is an uncharacterized protein from Saccharomyces cerevisiae (strain ATCC 204508 / S288c) (Baker's yeast).